A 638-amino-acid polypeptide reads, in one-letter code: Threonine--tRNA ligase (638 aa).

The TGS domain maps to 1–61; sequence MPIITLPDGS…NKDSKVVIIT (61 aa). The segment at 242–533 is catalytic; that stretch reads DHRKLGKKHS…LIEQYEAKFP (292 aa). 3 residues coordinate Zn(2+): C333, H384, and H510.

It belongs to the class-II aminoacyl-tRNA synthetase family. In terms of assembly, homodimer. Zn(2+) is required as a cofactor.

Its subcellular location is the cytoplasm. It catalyses the reaction tRNA(Thr) + L-threonine + ATP = L-threonyl-tRNA(Thr) + AMP + diphosphate + H(+). In terms of biological role, catalyzes the attachment of threonine to tRNA(Thr) in a two-step reaction: L-threonine is first activated by ATP to form Thr-AMP and then transferred to the acceptor end of tRNA(Thr). Also edits incorrectly charged L-seryl-tRNA(Thr). This Prochlorococcus marinus (strain MIT 9301) protein is Threonine--tRNA ligase.